A 152-amino-acid chain; its full sequence is 6,7-dimethyl-8-ribityllumazine synthase (152 aa).

5-amino-6-(D-ribitylamino)uracil contacts are provided by residues phenylalanine 21, 55–57, and 79–81; these read AFE and CVI. (2S)-2-hydroxy-3-oxobutyl phosphate is bound at residue 84–85; that stretch reads ST. Histidine 87 acts as the Proton donor in catalysis. Phenylalanine 112 is a binding site for 5-amino-6-(D-ribitylamino)uracil. Arginine 126 serves as a coordination point for (2S)-2-hydroxy-3-oxobutyl phosphate.

Belongs to the DMRL synthase family. Forms an icosahedral capsid composed of 60 subunits, arranged as a dodecamer of pentamers.

The catalysed reaction is (2S)-2-hydroxy-3-oxobutyl phosphate + 5-amino-6-(D-ribitylamino)uracil = 6,7-dimethyl-8-(1-D-ribityl)lumazine + phosphate + 2 H2O + H(+). Its pathway is cofactor biosynthesis; riboflavin biosynthesis; riboflavin from 2-hydroxy-3-oxobutyl phosphate and 5-amino-6-(D-ribitylamino)uracil: step 1/2. Catalyzes the formation of 6,7-dimethyl-8-ribityllumazine by condensation of 5-amino-6-(D-ribitylamino)uracil with 3,4-dihydroxy-2-butanone 4-phosphate. This is the penultimate step in the biosynthesis of riboflavin. In Staphylococcus saprophyticus subsp. saprophyticus (strain ATCC 15305 / DSM 20229 / NCIMB 8711 / NCTC 7292 / S-41), this protein is 6,7-dimethyl-8-ribityllumazine synthase.